Consider the following 101-residue polypeptide: U-scoloptoxin(10)-Sm2a (101 aa).

Positions 1 to 23 are cleaved as a signal peptide; that stretch reads MNKSMIILCAVLFLTYIIEENEA.

It belongs to the scoloptoxin-10 family. In terms of processing, contains 3 disulfide bonds. As to expression, expressed by the venom gland.

Its subcellular location is the secreted. The sequence is that of U-scoloptoxin(10)-Sm2a from Scolopendra morsitans (Tanzanian blue ringleg centipede).